We begin with the raw amino-acid sequence, 303 residues long: Coenzyme PQQ synthesis protein B (303 aa).

It belongs to the PqqB family.

Its pathway is cofactor biosynthesis; pyrroloquinoline quinone biosynthesis. May be involved in the transport of PQQ or its precursor to the periplasm. The sequence is that of Coenzyme PQQ synthesis protein B from Pseudomonas putida (strain W619).